The following is a 162-amino-acid chain: MSSFTHFNEQGRAKMVDITHKEDTVRVAVAQTSVTVSREIYEKMTSNAIEKGDVLAVAQVAGVMAAKKTADLIPMCHPLMLKGVDIAFAWENDGEAHKLVITATVKTKGSTGVEMEALTAASVCALTVYDMCKALDKGMVIGPTYLVEKTGGKSGHYRRKTD.

Substrate contacts are provided by residues 75–77 (MCH) and 115–116 (ME). Asp130 is a catalytic residue.

Belongs to the MoaC family. As to quaternary structure, homohexamer; trimer of dimers.

It catalyses the reaction (8S)-3',8-cyclo-7,8-dihydroguanosine 5'-triphosphate = cyclic pyranopterin phosphate + diphosphate. Its pathway is cofactor biosynthesis; molybdopterin biosynthesis. Functionally, catalyzes the conversion of (8S)-3',8-cyclo-7,8-dihydroguanosine 5'-triphosphate to cyclic pyranopterin monophosphate (cPMP). This Geobacillus kaustophilus (strain HTA426) protein is Cyclic pyranopterin monophosphate synthase.